A 714-amino-acid chain; its full sequence is Polyribonucleotide nucleotidyltransferase (714 aa).

Mg(2+) is bound by residues Asp496 and Asp502. The 60-residue stretch at 562–621 (PRLLTIKIDPDLIGMVIGPGGKTIKGITEQTRAKVDIADDGTVTIASSESENAEKAKRLI) folds into the KH domain. Residues 631 to 699 (GDVYFGKVTR…NKGRINLTRL (69 aa)) enclose the S1 motif domain.

This sequence belongs to the polyribonucleotide nucleotidyltransferase family. Mg(2+) is required as a cofactor.

The protein resides in the cytoplasm. The enzyme catalyses RNA(n+1) + phosphate = RNA(n) + a ribonucleoside 5'-diphosphate. Functionally, involved in mRNA degradation. Catalyzes the phosphorolysis of single-stranded polyribonucleotides processively in the 3'- to 5'-direction. The chain is Polyribonucleotide nucleotidyltransferase from Picosynechococcus sp. (strain ATCC 27264 / PCC 7002 / PR-6) (Agmenellum quadruplicatum).